We begin with the raw amino-acid sequence, 280 residues long: Eukaryotic translation initiation factor 3 subunit F-1 (280 aa).

The 131-residue stretch at 8-138 (VRVHPVVLFQ…LRAYVCIQLG (131 aa)) folds into the MPN domain.

Belongs to the eIF-3 subunit F family. As to quaternary structure, component of the eukaryotic translation initiation factor 3 (eIF-3) complex. The eIF-3 complex interacts with pix.

The protein resides in the cytoplasm. Component of the eukaryotic translation initiation factor 3 (eIF-3) complex, which is involved in protein synthesis of a specialized repertoire of mRNAs and, together with other initiation factors, stimulates binding of mRNA and methionyl-tRNAi to the 40S ribosome. The eIF-3 complex specifically targets and initiates translation of a subset of mRNAs involved in cell proliferation. This Drosophila yakuba (Fruit fly) protein is Eukaryotic translation initiation factor 3 subunit F-1.